The following is a 363-amino-acid chain: Pyrimidine monooxygenase RutA (363 aa).

FMN-binding positions include isoleucine 49–lysine 50, asparagine 115, glutamate 124, arginine 140–tyrosine 141, and serine 190.

It belongs to the NtaA/SnaA/DszA monooxygenase family. RutA subfamily.

The enzyme catalyses uracil + FMNH2 + NADH + O2 = (Z)-3-ureidoacrylate + FMN + NAD(+) + H2O + H(+). The catalysed reaction is thymine + FMNH2 + NADH + O2 = (Z)-2-methylureidoacrylate + FMN + NAD(+) + H2O + H(+). Its function is as follows. Catalyzes the pyrimidine ring opening between N-3 and C-4 by an unusual flavin hydroperoxide-catalyzed mechanism, adding oxygen atoms in the process to yield ureidoacrylate peracid, that immediately reacts with FMN forming ureidoacrylate and FMN-N(5)-oxide. The FMN-N(5)-oxide reacts spontaneously with NADH to produce FMN. Requires the flavin reductase RutF to regenerate FMN in vivo. In Rhizobium rhizogenes (strain K84 / ATCC BAA-868) (Agrobacterium radiobacter), this protein is Pyrimidine monooxygenase RutA.